The sequence spans 392 residues: MKSEYDVIVVGAGPGGSLAAKTAAEQGLDVLLIEKRQEIGDPVRCAEGVGKAGLQEFVEPDPKWISADIKCARIFSPDGTMVELSEKMAGNEVGFVLERKIFDRELAKMAAKAGAEVQVKTQATGLIIENGQVCGITGKRHGDEFTARAKVVVAADGVESKVGRWAGINTTLKMKDIETCAQFLMTDINIKPNSCDFYLGSKYAPGGYVWVFPKGDREANVGLGMLASHYKGKHPIEYLREFVADKFPEGKILETVVGAVPVSGMLPKLSTGGLVLVGDAGHVSDPITGGGIINAMSSGRIAGNIIANCIRAGDVSAKALSRYDAEVREALGKSLDKNYKIKEVVTKVSDNTMNVAAHSLQGVDFENVTVTKLVKEIVTRNPALLKELVGLI.

FAD contacts are provided by Gly-15, Glu-34, Cys-45, Ala-46, Gly-48, Arg-99, Ala-123, Asp-279, Gly-291, and Ile-292. An a 2,3-bis-O-(geranylgeranyl)-sn-glycerol 1-phospholipid-binding site is contributed by Val-370.

It belongs to the geranylgeranyl reductase family. DGGGPL reductase subfamily. The cofactor is FAD.

The enzyme catalyses a 2,3-bis-O-phytanyl-sn-glycerol 1-phospholipid + 8 oxidized 2[4Fe-4S]-[ferredoxin] = a 2,3-bis-O-(geranylgeranyl)-sn-glycerol 1-phospholipid + 8 reduced 2[4Fe-4S]-[ferredoxin] + 16 H(+). It catalyses the reaction 2,3-bis-O-(phytanyl)-sn-glycerol 1-phosphate + 8 oxidized 2[4Fe-4S]-[ferredoxin] = 2,3-bis-O-(geranylgeranyl)-sn-glycerol 1-phosphate + 8 reduced 2[4Fe-4S]-[ferredoxin] + 16 H(+). It carries out the reaction a 2,3-bis-O-phytanyl-sn-glycerol 1-phospholipid + 8 A = a 2,3-bis-O-(geranylgeranyl)-sn-glycerol 1-phospholipid + 8 AH2. The catalysed reaction is CDP-2,3-bis-O-(geranylgeranyl)-sn-glycerol + 8 AH2 = CDP-2,3-bis-O-(phytanyl)-sn-glycerol + 8 A. The enzyme catalyses archaetidylserine + 8 AH2 = 2,3-bis-O-phytanyl-sn-glycero-3-phospho-L-serine + 8 A. It functions in the pathway membrane lipid metabolism; glycerophospholipid metabolism. Its function is as follows. Is involved in the reduction of 2,3-digeranylgeranylglycerophospholipids (unsaturated archaeols) into 2,3-diphytanylglycerophospholipids (saturated archaeols) in the biosynthesis of archaeal membrane lipids. Catalyzes the formation of archaetidic acid (2,3-di-O-phytanyl-sn-glyceryl phosphate) from 2,3-di-O-geranylgeranylglyceryl phosphate (DGGGP) via the hydrogenation of each double bond of the isoprenoid chains. Is also probably able to reduce double bonds of geranyl groups in CDP-2,3-bis-O-(geranylgeranyl)-sn-glycerol and archaetidylserine, thus acting at various stages in the biosynthesis of archaeal membrane lipids. The chain is Digeranylgeranylglycerophospholipid reductase from Methanocella arvoryzae (strain DSM 22066 / NBRC 105507 / MRE50).